Here is a 205-residue protein sequence, read N- to C-terminus: Holliday junction branch migration complex subunit RuvA (205 aa).

The tract at residues 1–64 (MIGRLRGTLA…EDAHLLYGFH (64 aa)) is domain I. Residues 65-143 (EKRERELFRE…AWETSPAMFT (79 aa)) are domain II. Positions 144 to 153 (LVSDGPVPVS) are flexible linker. Residues 154-205 (GASTAEADAVSALVSLGYKPQEASKAVSAIKDKAGLSSEELIRRSLKGMITK) form a domain III region.

It belongs to the RuvA family. Homotetramer. Forms an RuvA(8)-RuvB(12)-Holliday junction (HJ) complex. HJ DNA is sandwiched between 2 RuvA tetramers; dsDNA enters through RuvA and exits via RuvB. An RuvB hexamer assembles on each DNA strand where it exits the tetramer. Each RuvB hexamer is contacted by two RuvA subunits (via domain III) on 2 adjacent RuvB subunits; this complex drives branch migration. In the full resolvosome a probable DNA-RuvA(4)-RuvB(12)-RuvC(2) complex forms which resolves the HJ.

The protein resides in the cytoplasm. The RuvA-RuvB-RuvC complex processes Holliday junction (HJ) DNA during genetic recombination and DNA repair, while the RuvA-RuvB complex plays an important role in the rescue of blocked DNA replication forks via replication fork reversal (RFR). RuvA specifically binds to HJ cruciform DNA, conferring on it an open structure. The RuvB hexamer acts as an ATP-dependent pump, pulling dsDNA into and through the RuvAB complex. HJ branch migration allows RuvC to scan DNA until it finds its consensus sequence, where it cleaves and resolves the cruciform DNA. The polypeptide is Holliday junction branch migration complex subunit RuvA (Pseudomonas putida (strain W619)).